A 733-amino-acid polypeptide reads, in one-letter code: Hypermethylated in cancer 1 protein (733 aa).

Residues 47-110 (CDVIIVVQNA…IYTGRLTDSV (64 aa)) enclose the BTB domain. Residues 154–315 (KYCHLRGGGS…PFRGSGGSPG (162 aa)) form a mediates HDAC-dependent transcriptional repression region. The residue at position 159 (arginine 159) is an Omega-N-methylarginine. The disordered stretch occupies residues 189–209 (YSSPAGPPPPPAAEPPSGPDA). Residues 193-206 (AGPPPPPAAEPPSG) show a composition bias toward pro residues. A Phosphoserine modification is found at serine 237. The segment at 241–247 (GLDLSKK) is interaction with CTBP1. A disordered region spans residues 241-421 (GLDLSKKSPP…PGGHLEGYPC (181 aa)). Serine 248 bears the Phosphoserine mark. An N6-acetyllysine; alternate modification is found at lysine 333. Lysine 333 participates in a covalent cross-link: Glycyl lysine isopeptide (Lys-Gly) (interchain with G-Cter in SUMO); alternate. Residues 344 to 361 (ELVRDRGSPGERLEERGG) show a composition bias toward basic and acidic residues. Serine 366 is modified (phosphoserine). The span at 368 to 380 (GGPPLGLVPPPRY) shows a compositional bias: pro residues. 5 C2H2-type zinc fingers span residues 437–464 (YVCI…EEEE), 507–534 (YRCA…LTRP), 535–562 (YPCT…GLKP), 563–590 (FACD…GEKP), and 591–618 (YECQ…VGGA). The residue at position 704 (serine 704) is a Phosphoserine.

It belongs to the krueppel C2H2-type zinc-finger protein family. Hic subfamily. In terms of assembly, self-associates. Interacts with HIC2. Interacts with CTBP1 and CTBP2. Interacts with TCF7L2 and ARID1A. Interacts with MTA1 and MBD3; indicative for an association with the NuRD complex. Interacts with SIRT1. Acetylated on several residues, including Lys-333. Lys-333 is deacetylated by SIRT1. Post-translationally, sumoylated on Lys-333 by a PIAS family member, which enhances interaction with MTA1, positively regulates transcriptional repression activity and is enhanced by HDAC4. Ubiquitously expressed with highest levels in heart and lung.

The protein localises to the nucleus. In terms of biological role, transcriptional repressor. Recognizes and binds to the consensus sequence '5-[CG]NG[CG]GGGCA[CA]CC-3'. May act as a tumor suppressor. Involved in development of head, face, limbs and ventral body wall. Involved in down-regulation of SIRT1 and thereby is involved in regulation of p53/TP53-dependent apoptotic DNA-damage responses. The specific target gene promoter association seems to be depend on corepressors, such as CTBP1 or CTBP2 and MTA1. In cooperation with MTA1 (indicative for an association with the NuRD complex) represses transcription from CCND1/cyclin-D1 and CDKN1C/p57Kip2 specifically in quiescent cells. Involved in regulation of the Wnt signaling pathway probably by association with TCF7L2 and preventing TCF7L2 and CTNNB1 association with promoters of TCF-responsive genes. Seems to repress transcription from E2F1 and ATOH1 which involves ARID1A, indicative for the participation of a distinct SWI/SNF-type chromatin-remodeling complex. Probably represses transcription from ACKR3, FGFBP1 and EFNA1. The sequence is that of Hypermethylated in cancer 1 protein (Hic1) from Mus musculus (Mouse).